A 196-amino-acid polypeptide reads, in one-letter code: ATP-dependent Clp protease proteolytic subunit (196 aa).

Serine 101 acts as the Nucleophile in catalysis. Histidine 126 is an active-site residue.

The protein belongs to the peptidase S14 family. Component of the chloroplastic Clp protease core complex.

It localises to the plastid. The protein localises to the chloroplast stroma. It catalyses the reaction Hydrolysis of proteins to small peptides in the presence of ATP and magnesium. alpha-casein is the usual test substrate. In the absence of ATP, only oligopeptides shorter than five residues are hydrolyzed (such as succinyl-Leu-Tyr-|-NHMec, and Leu-Tyr-Leu-|-Tyr-Trp, in which cleavage of the -Tyr-|-Leu- and -Tyr-|-Trp bonds also occurs).. Cleaves peptides in various proteins in a process that requires ATP hydrolysis. Has a chymotrypsin-like activity. Plays a major role in the degradation of misfolded proteins. In Lobularia maritima (Sweet alyssum), this protein is ATP-dependent Clp protease proteolytic subunit.